The primary structure comprises 301 residues: Troponin T, cardiac muscle (301 aa).

Acidic residues-rich tracts occupy residues 1–42 (MSDL…EEEA) and 50–74 (AETE…DGPV). 2 disordered regions span residues 1-99 (MSDL…GERV) and 125-223 (ENRK…KKKK). Serine 2 bears the N-acetylserine mark. Serine 2 carries the post-translational modification Phosphoserine; by CK2. Residues 82-93 (RPFMPNLVPPKI) are compositionally biased toward pro residues. Composition is skewed to basic and acidic residues over residues 125–186 (ENRK…DEAR) and 206–223 (QTER…KKKK). Threonine 207 carries the post-translational modification Phosphothreonine; by PKC/PRKCA. Residue serine 211 is modified to Phosphoserine; by PKC/PRKCA. A Phosphothreonine; by PKC/PRKCA and RAF1 modification is found at threonine 216. A Phosphothreonine; by PKC/PRKCA modification is found at threonine 297.

Belongs to the troponin T family. In terms of assembly, binds with troponins I and C to make the thin-filament regulatory complex, troponin. Post-translationally, phosphorylation at Thr-216 by PRKCA induces significant reduction in myofilament calcium sensitivity and actomyosin ATPase activity. As to expression, the major isoform in adult heart is CTNT4.

Troponin T is the tropomyosin-binding subunit of troponin, the thin filament regulatory complex which confers calcium-sensitivity to striated muscle actomyosin ATPase activity. This chain is Troponin T, cardiac muscle (TNNT2), found in Oryctolagus cuniculus (Rabbit).